The sequence spans 180 residues: MKITISGPPGSGTTTVAKIVAEKLGLKLISAGDVFRQLAAKKGMTVEEFSQYAEENPEIDRLIDQTQKEMAEKEKNVVVEGRLSGWFVKNADLKVWIFADPEVRYSRIAKREGKDLTVVRQETRLREEFEKRRYWKFYSIDIDNWTIYDLIINSGSFDAEGVVEIILKAVEVKKIKVDQK.

Residue 7–15 (GPPGSGTTT) coordinates ATP.

The protein belongs to the cytidylate kinase family. Type 2 subfamily.

It localises to the cytoplasm. It carries out the reaction CMP + ATP = CDP + ADP. It catalyses the reaction dCMP + ATP = dCDP + ADP. The polypeptide is Cytidylate kinase (cmk) (Archaeoglobus fulgidus (strain ATCC 49558 / DSM 4304 / JCM 9628 / NBRC 100126 / VC-16)).